The primary structure comprises 233 residues: ATP synthase subunit a (233 aa).

Helical transmembrane passes span 29–49, 60–80, 89–109, 115–135, 143–163, 185–205, and 206–226; these read FKHV…SFIV, LQNI…SITG, VLIV…VPGF, NINT…YIGI, IKHF…LELI, FVLI…IYFL, and FTLA…IYLK.

The protein belongs to the ATPase A chain family. F-type ATPases have 2 components, CF(1) - the catalytic core - and CF(0) - the membrane proton channel. CF(1) has five subunits: alpha(3), beta(3), gamma(1), delta(1), epsilon(1). CF(0) has three main subunits: a(1), b(2) and c(9-12). The alpha and beta chains form an alternating ring which encloses part of the gamma chain. CF(1) is attached to CF(0) by a central stalk formed by the gamma and epsilon chains, while a peripheral stalk is formed by the delta and b chains.

It is found in the cell inner membrane. Key component of the proton channel; it plays a direct role in the translocation of protons across the membrane. The polypeptide is ATP synthase subunit a (Oleidesulfovibrio alaskensis (strain ATCC BAA-1058 / DSM 17464 / G20) (Desulfovibrio alaskensis)).